We begin with the raw amino-acid sequence, 439 residues long: MLTIATLHVALQVFGAFSPSHAAAVTLEHRSARDGNSVAVPANWDVYGYLFNVTVGSPPQNITMLSDMTWMAPFVRSGRCLGQFNPELCVAQGQSFFNEHNSTTFANTTFAQATWPVTAFAPNFTVDYGRDKFCIGEICNKDTLMQVSDFPYPGSVVPVIPFGGIFGLAPTPEAITATSEPVNFQAWKNGKMGPLVGWHTCEVLKSAATCQGGDAQLVFGGTDTTMYSAKKLQSYEIQNPEWLSDAFYPSTPPRSNYWSTSLTGMWIRTDKLSKNYAVPFKAVKTAKRTPPLAVVDEGSEGLGAPLSLNGYKYLVRHIKSAKLASKAIVQNIQQQGSSGYNTADQDWYTVACDGLHEYPDLVYQLDGRKKYTISAGDYVTKLTDMPGSVCYLNINVWKYGRTENGDARVVLLGRAFLKRKYLVLNFEDRSFGLAPLRTG.

The signal sequence occupies residues 1-22; that stretch reads MLTIATLHVALQVFGAFSPSHA. The region spanning 49–434 is the Peptidase A1 domain; sequence YLFNVTVGSP…NFEDRSFGLA (386 aa). Residues asparagine 52 and asparagine 61 are each glycosylated (N-linked (GlcNAc...) asparagine). Residue aspartate 67 is part of the active site. N-linked (GlcNAc...) asparagine glycosylation is found at asparagine 101, asparagine 107, and asparagine 123. Aspartate 296 is an active-site residue. The cysteines at positions 352 and 390 are disulfide-linked.

This sequence belongs to the peptidase A1 family.

It localises to the secreted. Functionally, secreted aspartic protease; part of the gene cluster that mediates the biosynthesis of the mycotoxin fusarin C. Within the cluster, FUS1, FUS2, FUS8 and FUS9 are sufficient for fusarin production. The other FUS cluster members are not essential for fusarin C biosynthesis. The protein is Secreted aspartic protease FUS4 of Gibberella moniliformis (strain M3125 / FGSC 7600) (Maize ear and stalk rot fungus).